We begin with the raw amino-acid sequence, 201 residues long: MYEYIKGKYIGINKDYIIVDNNGVGYKIFTSGNTMANMPKPEEDVLIYLTQIVRQDFIGLYGFLTKDELEMFNKLLTINGVGAKASLSLLSICTVNNLKYAIITGDEKTIVKAPGIGKKTAQRIILELKDKFKSTDISKGNSEINNLDVDYDEHSKKLEEVRFALNSLGYSEKETDRAINNVDKSEGIENIIKSCLRFLMN.

The tract at residues 1–64 (MYEYIKGKYI…QDFIGLYGFL (64 aa)) is domain I. A domain II region spans residues 65-143 (TKDELEMFNK…STDISKGNSE (79 aa)). A flexible linker region spans residues 144-154 (INNLDVDYDEH). The interval 154-201 (HSKKLEEVRFALNSLGYSEKETDRAINNVDKSEGIENIIKSCLRFLMN) is domain III.

This sequence belongs to the RuvA family. Homotetramer. Forms an RuvA(8)-RuvB(12)-Holliday junction (HJ) complex. HJ DNA is sandwiched between 2 RuvA tetramers; dsDNA enters through RuvA and exits via RuvB. An RuvB hexamer assembles on each DNA strand where it exits the tetramer. Each RuvB hexamer is contacted by two RuvA subunits (via domain III) on 2 adjacent RuvB subunits; this complex drives branch migration. In the full resolvosome a probable DNA-RuvA(4)-RuvB(12)-RuvC(2) complex forms which resolves the HJ.

The protein localises to the cytoplasm. Functionally, the RuvA-RuvB-RuvC complex processes Holliday junction (HJ) DNA during genetic recombination and DNA repair, while the RuvA-RuvB complex plays an important role in the rescue of blocked DNA replication forks via replication fork reversal (RFR). RuvA specifically binds to HJ cruciform DNA, conferring on it an open structure. The RuvB hexamer acts as an ATP-dependent pump, pulling dsDNA into and through the RuvAB complex. HJ branch migration allows RuvC to scan DNA until it finds its consensus sequence, where it cleaves and resolves the cruciform DNA. The chain is Holliday junction branch migration complex subunit RuvA from Clostridium acetobutylicum (strain ATCC 824 / DSM 792 / JCM 1419 / IAM 19013 / LMG 5710 / NBRC 13948 / NRRL B-527 / VKM B-1787 / 2291 / W).